A 516-amino-acid chain; its full sequence is MDGQVTVKRHGDTHFANIGYGYYTFGVSVGYILLLLLLRKRRGTAVPRSRHKLFQMMIDGSPALHLPILLLFLEIAFLGHYSVIDHASVYIKRLGRLSYVLLFLNIFLTLRPNYILSDYTYVQLLPMHMWLSRAISTFGVFHGLAFVIKWQLDNEVSLASKLFNLWNLLGFIVWILLIILLITSTGVIRRRSYKSFYMVHQINAFAISFIVPVHARPGVALPYTITIAVLLGLHALARVSFCMSSAVVHKLSNYQKGSKLVRIKLPRNVMPEHFTPGSHIRVSPYRRSNPLYWLVPSHPFTIASLPDDDHVDLILREHGHFEFEVGPRYSIVHNYEGITALQLGLVNRVTIVVGGTGISLGLPLFRYFKENTDIGYLKMIWTVKSHADLHVLDDFEGIDIFVTQNTTTTPIPGASESWDEIPLEEFELNSMDDLEAEEEHLGESGALLPTTKRKKDPGAINIGRRLDWNVELASFVRSEGSSDQLLIVCGPESLVKDGVQFATDHNIVFYKEVYSF.

The next 7 membrane-spanning stretches (helical) occupy residues 18–38 (IGYG…LLLL), 64–84 (LHLP…YSVI), 97–117 (LSYV…YILS), 128–148 (HMWL…AFVI), 168–188 (LLGF…TGVI), 195–215 (SFYM…PVHA), and 217–237 (PGVA…HALA). A Ferric oxidoreductase domain is found at 94-207 (LGRLSYVLLF…MVHQINAFAI (114 aa)). The FAD-binding FR-type domain occupies 238 to 363 (RVSFCMSSAV…GGTGISLGLP (126 aa)).

Belongs to the ferric reductase (FRE) family. AIM14 subfamily.

Its subcellular location is the membrane. Probable cell surface metalloreductase. May be involved in iron or copper homeostasis. The sequence is that of Probable metalloreductase AIM14 (AIM14) from Eremothecium gossypii (strain ATCC 10895 / CBS 109.51 / FGSC 9923 / NRRL Y-1056) (Yeast).